We begin with the raw amino-acid sequence, 534 residues long: Probable alanine aminotransferase, mitochondrial (534 aa).

A mitochondrion-targeting transit peptide spans methionine 1–valine 18. An N6-(pyridoxal phosphate)lysine modification is found at lysine 352.

Belongs to the class-I pyridoxal-phosphate-dependent aminotransferase family. Alanine aminotransferase subfamily. As to quaternary structure, homodimer. Requires pyridoxal 5'-phosphate as cofactor.

It is found in the mitochondrion matrix. The catalysed reaction is L-alanine + 2-oxoglutarate = pyruvate + L-glutamate. Its pathway is amino-acid degradation; L-alanine degradation via transaminase pathway; pyruvate from L-alanine: step 1/1. This Dictyostelium discoideum (Social amoeba) protein is Probable alanine aminotransferase, mitochondrial (gpt).